A 225-amino-acid chain; its full sequence is Membrane protein LapB (225 aa).

This sequence to H.influenzae HI_1119.

It is found in the cell membrane. The chain is Membrane protein LapB (lapB) from Mannheimia haemolytica (Pasteurella haemolytica).